The sequence spans 69 residues: Cytochrome c oxidase subunit 8A, mitochondrial (69 aa).

Residues methionine 1–lysine 25 constitute a mitochondrion transit peptide. Residues serine 2–leucine 19 carry the SIFI-degron motif. Over valine 26–glycine 36 the chain is Mitochondrial matrix. A helical transmembrane segment spans residues isoleucine 37 to serine 60. Residues histidine 61–glutamate 69 lie on the Mitochondrial intermembrane side of the membrane.

Belongs to the cytochrome c oxidase VIII family. Component of the cytochrome c oxidase (complex IV, CIV), a multisubunit enzyme composed of 14 subunits. The complex is composed of a catalytic core of 3 subunits MT-CO1, MT-CO2 and MT-CO3, encoded in the mitochondrial DNA, and 11 supernumerary subunits COX4I, COX5A, COX5B, COX6A, COX6B, COX6C, COX7A, COX7B, COX7C, COX8 and NDUFA4, which are encoded in the nuclear genome. The complex exists as a monomer or a dimer and forms supercomplexes (SCs) in the inner mitochondrial membrane with NADH-ubiquinone oxidoreductase (complex I, CI) and ubiquinol-cytochrome c oxidoreductase (cytochrome b-c1 complex, complex III, CIII), resulting in different assemblies (supercomplex SCI(1)III(2)IV(1) and megacomplex MCI(2)III(2)IV(2)). In terms of processing, in response to mitochondrial stress, the precursor protein is ubiquitinated by the SIFI complex in the cytoplasm before mitochondrial import, leading to its degradation. Within the SIFI complex, UBR4 initiates ubiquitin chain that are further elongated or branched by KCMF1.

Its subcellular location is the mitochondrion inner membrane. Its pathway is energy metabolism; oxidative phosphorylation. Functionally, component of the cytochrome c oxidase, the last enzyme in the mitochondrial electron transport chain which drives oxidative phosphorylation. The respiratory chain contains 3 multisubunit complexes succinate dehydrogenase (complex II, CII), ubiquinol-cytochrome c oxidoreductase (cytochrome b-c1 complex, complex III, CIII) and cytochrome c oxidase (complex IV, CIV), that cooperate to transfer electrons derived from NADH and succinate to molecular oxygen, creating an electrochemical gradient over the inner membrane that drives transmembrane transport and the ATP synthase. Cytochrome c oxidase is the component of the respiratory chain that catalyzes the reduction of oxygen to water. Electrons originating from reduced cytochrome c in the intermembrane space (IMS) are transferred via the dinuclear copper A center (CU(A)) of subunit 2 and heme A of subunit 1 to the active site in subunit 1, a binuclear center (BNC) formed by heme A3 and copper B (CU(B)). The BNC reduces molecular oxygen to 2 water molecules using 4 electrons from cytochrome c in the IMS and 4 protons from the mitochondrial matrix. The polypeptide is Cytochrome c oxidase subunit 8A, mitochondrial (COX8A) (Macaca silenus (Lion-tailed macaque)).